Reading from the N-terminus, the 410-residue chain is Transcription factor E2F4 (410 aa).

A disordered region spans residues Met-1–Lys-20. At Ala-2 the chain carries N-acetylalanine. A DNA-binding region spans residues Ser-16–Gly-85. Residues Leu-43–Leu-65 are leucine-zipper. Residues Asp-48–Gly-85 carry the DEF box motif. The segment at Pro-86–Ile-181 is dimerization. Disordered regions lie at residues Pro-203–Gln-258 and Ser-303–Gly-341. Composition is skewed to low complexity over residues Pro-231–Pro-252 and Ser-308–Ser-324. The transactivation stretch occupies residues Pro-334–Leu-410. Ser-381 carries the post-translational modification Phosphoserine. An HCFC1-binding-motif (HBM) motif is present at residues Asp-386–Tyr-389. Residues His-387 to Asp-404 form an interaction with RBL1 and RBL2 region.

Belongs to the E2F/DP family. Component of the DRTF1/E2F transcription factor complex. Binds cooperatively with TFDP1/Dp-1 to E2F sites. The E2F4/TFDP1 dimer interacts preferentially with pocket protein RBL1, which inhibits the E2F transactivation domain. Lower affinity interaction has been found with retinoblastoma protein RB1. Interacts with TRRAP, which probably mediates its interaction with histone acetyltransferase complexes, leading to transcription activation. Interacts with HCFC1. Component of the DREAM complex (also named LINC complex) at least composed of E2F4, E2F5, LIN9, LIN37, LIN52, LIN54, MYBL1, MYBL2, RBL1, RBL2, RBBP4, TFDP1 and TFDP2. The complex exists in quiescent cells where it represses cell cycle-dependent genes. It dissociates in S phase when LIN9, LIN37, LIN52 and LIN54 form a subcomplex that binds to MYBL2. Interacts with PML. Interacts with CEBPA (when phosphorylated). Differentially phosphorylated in vivo.

The protein localises to the nucleus. Its function is as follows. Transcription activator that binds DNA cooperatively with DP proteins through the E2 recognition site, 5'-TTTC[CG]CGC-3' found in the promoter region of a number of genes whose products are involved in cell cycle regulation or in DNA replication. The DRTF1/E2F complex functions in the control of cell-cycle progression from G1 to S phase. E2F4 binds with high affinity to RBL1 and RBL2. In some instances can also bind RB1. Specifically required for multiciliate cell differentiation: together with MCIDAS and E2F5, binds and activate genes required for centriole biogenesis. This is Transcription factor E2F4 (E2f4) from Mus musculus (Mouse).